We begin with the raw amino-acid sequence, 345 residues long: tRNA N6-adenosine threonylcarbamoyltransferase (345 aa).

Fe cation contacts are provided by His-109 and His-113. Substrate is bound by residues 136–140 (TVSGG), Asp-169, Gly-182, Asp-186, and Asn-284. Asp-312 lines the Fe cation pocket.

Belongs to the KAE1 / TsaD family. Fe(2+) serves as cofactor.

Its subcellular location is the cytoplasm. It carries out the reaction L-threonylcarbamoyladenylate + adenosine(37) in tRNA = N(6)-L-threonylcarbamoyladenosine(37) in tRNA + AMP + H(+). Required for the formation of a threonylcarbamoyl group on adenosine at position 37 (t(6)A37) in tRNAs that read codons beginning with adenine. Is involved in the transfer of the threonylcarbamoyl moiety of threonylcarbamoyl-AMP (TC-AMP) to the N6 group of A37, together with TsaE and TsaB. TsaD likely plays a direct catalytic role in this reaction. The polypeptide is tRNA N6-adenosine threonylcarbamoyltransferase (Prosthecochloris aestuarii (strain DSM 271 / SK 413)).